The sequence spans 383 residues: Acetylornithine deacetylase (383 aa).

His80 is a Zn(2+) binding site. The active site involves Asp82. Asp112 serves as a coordination point for Zn(2+). The active site involves Glu144. The Zn(2+) site is built by Glu145, Glu169, and His355.

This sequence belongs to the peptidase M20A family. ArgE subfamily. Homodimer. Zn(2+) is required as a cofactor. The cofactor is Co(2+). Glutathione serves as cofactor.

It localises to the cytoplasm. The enzyme catalyses N(2)-acetyl-L-ornithine + H2O = L-ornithine + acetate. It participates in amino-acid biosynthesis; L-arginine biosynthesis; L-ornithine from N(2)-acetyl-L-ornithine (linear): step 1/1. Its function is as follows. Catalyzes the hydrolysis of the amide bond of N(2)-acetylated L-amino acids. Cleaves the acetyl group from N-acetyl-L-ornithine to form L-ornithine, an intermediate in L-arginine biosynthesis pathway, and a branchpoint in the synthesis of polyamines. This Salmonella arizonae (strain ATCC BAA-731 / CDC346-86 / RSK2980) protein is Acetylornithine deacetylase.